The following is a 463-amino-acid chain: Interstitial collagenase B (463 aa).

The signal sequence occupies residues 1 to 17 (MPSLPLLLRLWAASSYS). Positions 18-96 (FPVIQDGLQK…PRCGVPDVAP (79 aa)) are cleaved as a propeptide — activation peptide. A Cysteine switch motif is present at residues 87-94 (PRCGVPDV). Cys89 serves as a coordination point for Zn(2+). A metalloprotease region spans residues 95-273 (APYAITHNNP…PIQLTDATLD (179 aa)). A Ca(2+)-binding site is contributed by Asp155. Zn(2+) is bound by residues His165 and Asp167. The Ca(2+) site is built by Asp172 and Gly173. His180 contacts Zn(2+). Positions 187 and 189 each coordinate Ca(2+). Position 193 (His193) interacts with Zn(2+). Position 195 (Asp195) interacts with Ca(2+). Residue His215 participates in Zn(2+) binding. Residue Glu216 is part of the active site. Zn(2+) is bound by residues His219 and His225. Cys275 and Cys463 are oxidised to a cystine. Hemopexin repeat units lie at residues 278 to 321 (GLTF…WPNL) and 322 to 368 (PGKF…FGFP). Ca(2+) is bound at residue Asp282. N-linked (GlcNAc...) asparagine glycosylation is present at Asn370. 2 Hemopexin repeats span residues 371-419 (VTNI…FPGI) and 420-463 (DYKV…WFNC). The Ca(2+) site is built by Asp375 and Asp424.

The protein belongs to the peptidase M10A family. Ca(2+) is required as a cofactor. It depends on Zn(2+) as a cofactor.

Its subcellular location is the secreted. It is found in the extracellular space. It localises to the extracellular matrix. It carries out the reaction Cleavage of the triple helix of collagen at about three-quarters of the length of the molecule from the N-terminus, at 775-Gly-|-Ile-776 in the alpha1(I) chain. Cleaves synthetic substrates and alpha-macroglobulins at bonds where P1' is a hydrophobic residue.. With respect to regulation, can be activated without removal of the activation peptide. The chain is Interstitial collagenase B (Mmp1b) from Mus musculus (Mouse).